The chain runs to 375 residues: Aminomethyltransferase (375 aa).

The protein belongs to the GcvT family. The glycine cleavage system is composed of four proteins: P, T, L and H.

It carries out the reaction N(6)-[(R)-S(8)-aminomethyldihydrolipoyl]-L-lysyl-[protein] + (6S)-5,6,7,8-tetrahydrofolate = N(6)-[(R)-dihydrolipoyl]-L-lysyl-[protein] + (6R)-5,10-methylene-5,6,7,8-tetrahydrofolate + NH4(+). In terms of biological role, the glycine cleavage system catalyzes the degradation of glycine. The chain is Aminomethyltransferase from Cupriavidus taiwanensis (strain DSM 17343 / BCRC 17206 / CCUG 44338 / CIP 107171 / LMG 19424 / R1) (Ralstonia taiwanensis (strain LMG 19424)).